The chain runs to 33 residues: uncharacterized protein (33 aa).

The segment at 1 to 33 (MQPGTGLSFDISQILKQGSDPKQKLPERQAIVL) is disordered.

This is an uncharacterized protein from Caenorhabditis elegans.